The chain runs to 207 residues: FMN-dependent NADH:quinone oxidoreductase 2 (207 aa).

FMN is bound by residues Ser-10, 16–18, 96–99, and 141–144; these read SIS, MYNL, and SRGG.

Belongs to the azoreductase type 1 family. As to quaternary structure, homodimer. FMN serves as cofactor.

The enzyme catalyses 2 a quinone + NADH + H(+) = 2 a 1,4-benzosemiquinone + NAD(+). The catalysed reaction is N,N-dimethyl-1,4-phenylenediamine + anthranilate + 2 NAD(+) = 2-(4-dimethylaminophenyl)diazenylbenzoate + 2 NADH + 2 H(+). Functionally, quinone reductase that provides resistance to thiol-specific stress caused by electrophilic quinones. Also exhibits azoreductase activity. Catalyzes the reductive cleavage of the azo bond in aromatic azo compounds to the corresponding amines. The sequence is that of FMN-dependent NADH:quinone oxidoreductase 2 from Trichormus variabilis (strain ATCC 29413 / PCC 7937) (Anabaena variabilis).